The primary structure comprises 1251 residues: Phospholipid-transporting ATPase IC (1251 aa).

The interval 1-54 (MSTERDSETTFDEDSQPNDEVVPYSDDETEDELDDQGSAVEPEQNRVNREAEEN) is disordered. Topologically, residues 1-108 (MSTERDSETT…TYKYNAFTFI (108 aa)) are cytoplasmic. Acidic residues predominate over residues 25 to 35 (SDDETEDELDD). Basic and acidic residues predominate over residues 43–54 (EQNRVNREAEEN). The helical transmembrane segment at 109-130 (PMNLFEQFKRAANLYFLALLIL) threads the bilayer. The Exoplasmic loop segment spans residues 131-136 (QAVPQI). The helical transmembrane segment at 137 to 156 (STLAWYTTLVPLLVVLGVTA) threads the bilayer. At 157-340 (IKDLVDDVAR…TKIDYLMNYM (184 aa)) the chain is on the cytoplasmic side. The helical transmembrane segment at 341 to 362 (VYTIFVVLILLSAGLAIGHAYW) threads the bilayer. Over 363–389 (EAQVGNSSWYLYDGEDDTPSYRGFLIF) the chain is Exoplasmic loop. The chain crosses the membrane as a helical span at residues 390–411 (WGYIIVLNTMVPISLYVSVEVI). The Cytoplasmic portion of the chain corresponds to 412-949 (RLGQSHFINW…GRWSYIRMCK (538 aa)). Aspartate 454 (4-aspartylphosphate intermediate) is an active-site residue. Residues aspartate 454, lysine 455, threonine 456, glutamate 555, phenylalanine 596, lysine 619, arginine 652, threonine 732, glycine 733, aspartate 734, arginine 867, and lysine 873 each coordinate ATP. Aspartate 454 contacts Mg(2+). Residue threonine 456 coordinates Mg(2+). Aspartate 893 is a binding site for Mg(2+). ATP contacts are provided by asparagine 896 and aspartate 897. Residue aspartate 897 coordinates Mg(2+). A helical membrane pass occupies residues 950-970 (FLRYFFYKNFAFTLVHFWYSF). The Exoplasmic loop portion of the chain corresponds to 971–982 (FNGYSAQTAYED). Residues 983–1002 (WFITLYNVLYTSLPVLLMGL) form a helical membrane-spanning segment. The Cytoplasmic portion of the chain corresponds to 1003–1032 (LDQDVSDKLSLRFPGLYIVGQRDLLFNYKR). The chain crosses the membrane as a helical span at residues 1033 to 1054 (FFVSLLHGVLTSMILFFIPLGA). Residues 1055-1068 (YLQTVGQDGEAPSD) lie on the Exoplasmic loop side of the membrane. A helical membrane pass occupies residues 1069–1091 (YQSFAVTIASALVITVNFQIGLD). The Cytoplasmic segment spans residues 1092–1097 (TSYWTF). Residues 1098 to 1118 (VNAFSIFGSIALYFGIMFDFH) form a helical membrane-spanning segment. Residues 1119 to 1138 (SAGIHVLFPSAFQFTGTASN) lie on the Exoplasmic loop side of the membrane. Residues 1139–1163 (ALRQPYIWLTIILAVAVCLLPVVAI) traverse the membrane as a helical segment. The Cytoplasmic portion of the chain corresponds to 1164 to 1251 (RFLSMTIWPS…TAEYRRTGDS (88 aa)). The residue at position 1223 (serine 1223) is a Phosphoserine.

The protein belongs to the cation transport ATPase (P-type) (TC 3.A.3) family. Type IV subfamily. As to quaternary structure, component of a P4-ATPase flippase complex which consists of a catalytic alpha subunit ATP8B1 and an accessory beta subunit TMEM30A. The flippase ATP8B1:TMEM30A complex can form an intermediate phosphoenzyme in vitro. Also interacts with beta subunit TMEM30B. The cofactor is Mg(2+). In terms of tissue distribution, found in most tissues except brain and skeletal muscle. Most abundant in pancreas and small intestine.

Its subcellular location is the cell membrane. It localises to the apical cell membrane. It is found in the cell projection. The protein localises to the stereocilium. The protein resides in the endoplasmic reticulum. Its subcellular location is the golgi apparatus. The enzyme catalyses ATP + H2O + phospholipidSide 1 = ADP + phosphate + phospholipidSide 2.. It catalyses the reaction a 1,2-diacyl-sn-glycero-3-phosphocholine(out) + ATP + H2O = a 1,2-diacyl-sn-glycero-3-phosphocholine(in) + ADP + phosphate + H(+). The catalysed reaction is a 1,2-diacyl-sn-glycero-3-phospho-L-serine(out) + ATP + H2O = a 1,2-diacyl-sn-glycero-3-phospho-L-serine(in) + ADP + phosphate + H(+). Its function is as follows. Catalytic component of a P4-ATPase flippase complex which catalyzes the hydrolysis of ATP coupled to the transport of phospholipids, in particular phosphatidylcholines (PC), from the outer to the inner leaflet of the plasma membrane. May participate in the establishment of the canalicular membrane integrity by ensuring asymmetric distribution of phospholipids in the canicular membrane. Thus may have a role in the regulation of bile acids transport into the canaliculus, uptake of bile acids from intestinal contents into intestinal mucosa or both and protect hepatocytes from bile salts. Involved in the microvillus formation in polarized epithelial cells; the function seems to be independent from its flippase activity. Participates in correct apical membrane localization of CDC42, CFTR and SLC10A2. Enables CDC42 clustering at the apical membrane during enterocyte polarization through the interaction between CDC42 polybasic region and negatively charged membrane lipids provided by ATP8B1. Together with TMEM30A is involved in uptake of the synthetic drug alkylphospholipid perifosine. Required for the preservation of cochlear hair cells in the inner ear. May act as cardiolipin transporter during inflammatory injury. This chain is Phospholipid-transporting ATPase IC, found in Homo sapiens (Human).